Reading from the N-terminus, the 468-residue chain is Probable Xaa-Pro aminopeptidase PEPP (468 aa).

4 residues coordinate Mn(2+): Asp264, Asp275, Glu398, and Glu438.

The protein belongs to the peptidase M24B family. The cofactor is Mn(2+).

The catalysed reaction is Release of any N-terminal amino acid, including proline, that is linked to proline, even from a dipeptide or tripeptide.. In terms of biological role, catalyzes the removal of a penultimate prolyl residue from the N-termini of peptides. The chain is Probable Xaa-Pro aminopeptidase PEPP (PEPP) from Ajellomyces dermatitidis (strain ER-3 / ATCC MYA-2586) (Blastomyces dermatitidis).